Consider the following 198-residue polypeptide: ADP-ribosylation factor-like protein 3 (198 aa).

The residue at position 1 (methionine 1) is an N-acetylmethionine. Residue 24-31 (GLDNAGKT) participates in GTP binding. Lysine 50 participates in a covalent cross-link: Glycyl lysine isopeptide (Lys-Gly) (interchain with G-Cter in ubiquitin). GTP contacts are provided by residues 74–78 (DVGGQ) and 133–136 (NKQD).

It belongs to the small GTPase superfamily. Arf family. Interacts with SYS1 and SLO1.

Its subcellular location is the golgi apparatus. Functionally, involved in the targeting of ARL1 to the Golgi. Can bind and hydrolyze GTP. This Saccharomyces cerevisiae (strain ATCC 204508 / S288c) (Baker's yeast) protein is ADP-ribosylation factor-like protein 3 (ARL3).